The following is a 149-amino-acid chain: D-aminoacyl-tRNA deacylase (149 aa).

The short motif at 137–138 is the Gly-cisPro motif, important for rejection of L-amino acids element; it reads GP.

This sequence belongs to the DTD family. In terms of assembly, homodimer.

The protein resides in the cytoplasm. It carries out the reaction glycyl-tRNA(Ala) + H2O = tRNA(Ala) + glycine + H(+). The enzyme catalyses a D-aminoacyl-tRNA + H2O = a tRNA + a D-alpha-amino acid + H(+). Its function is as follows. An aminoacyl-tRNA editing enzyme that deacylates mischarged D-aminoacyl-tRNAs. Also deacylates mischarged glycyl-tRNA(Ala), protecting cells against glycine mischarging by AlaRS. Acts via tRNA-based rather than protein-based catalysis; rejects L-amino acids rather than detecting D-amino acids in the active site. By recycling D-aminoacyl-tRNA to D-amino acids and free tRNA molecules, this enzyme counteracts the toxicity associated with the formation of D-aminoacyl-tRNA entities in vivo and helps enforce protein L-homochirality. The chain is D-aminoacyl-tRNA deacylase from Clostridium botulinum (strain ATCC 19397 / Type A).